The chain runs to 1175 residues: DNA-directed RNA polymerase subunit beta (1175 aa).

Residues 1142–1175 (PMELSGSDDDEFDQAGASLGINLSRDERSDADIA) form a disordered region. Residues 1165–1175 (SRDERSDADIA) show a composition bias toward basic and acidic residues.

The protein belongs to the RNA polymerase beta chain family. As to quaternary structure, the RNAP catalytic core consists of 2 alpha, 1 beta, 1 beta' and 1 omega subunit. When a sigma factor is associated with the core the holoenzyme is formed, which can initiate transcription.

The enzyme catalyses RNA(n) + a ribonucleoside 5'-triphosphate = RNA(n+1) + diphosphate. In terms of biological role, DNA-dependent RNA polymerase catalyzes the transcription of DNA into RNA using the four ribonucleoside triphosphates as substrates. The chain is DNA-directed RNA polymerase subunit beta from Corynebacterium diphtheriae (strain ATCC 700971 / NCTC 13129 / Biotype gravis).